Consider the following 273-residue polypeptide: MAIVKCKPTSPGRRHVIKVVNKELYKGKPYSLLLSKKSKTGGRNNNGRITTRHIGGGHKRIYRIIDFKRNKDNITASIERFEYDPNRSSNIALILYKDGKRNYILAPKNLKVGDTVISGENVPIKIGNSLPIKNIPVGSFIHNVEMRPGKGGQIARSAGSYVQLVACDKEYATLRLRSGEMRKTESNCRATIGEVGNSEHMLKVLGKAGASRWIGIRPTVRGTAMNPVDHPHGGGEGRNFGKHPVTPWGLQTKGKKTRKNKRTEKFILRHRHK.

Residues 224 to 263 (AMNPVDHPHGGGEGRNFGKHPVTPWGLQTKGKKTRKNKRT) are disordered. The segment covering 253–263 (KGKKTRKNKRT) has biased composition (basic residues).

Belongs to the universal ribosomal protein uL2 family. In terms of assembly, part of the 50S ribosomal subunit. Forms a bridge to the 30S subunit in the 70S ribosome.

Functionally, one of the primary rRNA binding proteins. Required for association of the 30S and 50S subunits to form the 70S ribosome, for tRNA binding and peptide bond formation. It has been suggested to have peptidyltransferase activity; this is somewhat controversial. Makes several contacts with the 16S rRNA in the 70S ribosome. The chain is Large ribosomal subunit protein uL2 from Buchnera aphidicola subsp. Schizaphis graminum (strain Sg).